Here is a 195-residue protein sequence, read N- to C-terminus: HTH-type transcriptional regulator BetI (195 aa).

The HTH tetR-type domain occupies 8-68 (PIRRRQLIDA…ATMRDITSQL (61 aa)). The segment at residues 31 to 50 (TIAQIARRAGVSTGIISHYF) is a DNA-binding region (H-T-H motif).

Its pathway is amine and polyamine biosynthesis; betaine biosynthesis via choline pathway [regulation]. Functionally, repressor involved in the biosynthesis of the osmoprotectant glycine betaine. It represses transcription of the choline transporter BetT and the genes of BetAB involved in the synthesis of glycine betaine. This chain is HTH-type transcriptional regulator BetI, found in Klebsiella pneumoniae (strain 342).